We begin with the raw amino-acid sequence, 633 residues long: Putative ankyrin repeat protein L774 (633 aa).

ANK repeat units follow at residues 91–120 (IYGH…EYDP), 123–152 (NCDD…FFKI), 221–250 (NVNK…EYDF), 252–275 (TILK…ILDS), 338–367 (DYDV…DVNN), 369–393 (MTYA…TLST), and 517–546 (DNLK…NSND).

This chain is Putative ankyrin repeat protein L774, found in Acanthamoeba polyphaga mimivirus (APMV).